Consider the following 351-residue polypeptide: MTTVEVPHGSRSVILTVSAVVEETADTRSIVFAVPDELRDKFAYRPGQFLTLRIPSDRTGSVARCYSLASSPFTDDAPKVTVKRTSDGYGSNWLCDNIATGQTLEVLPPAGVFTPKSLDHDFLLFGAGSGITPVISILKSALTQGGGKVVLVYANRDEKSVIFAEELRALAEKYPTRLTVVHWLESVQGLPTADQLAAIAAPYESYEAFMCGPGPFMDTVHQALNTVGMPRARVHAEVFNSLSGDPFADQAPVEVSDEDAADAATVEVELDGEVHKLSWPRKQTLVDIMLAKGIDVPYSCQEGECGSCACTVLEGKVEMENCDVLDPEDIEAGYILGCQARPVTDHLKIEF.

The region spanning 10–116 (SRSVILTVSA…LPPAGVFTPK (107 aa)) is the FAD-binding FR-type domain. Residues 264-351 (ATVEVELDGE…PVTDHLKIEF (88 aa)) form the 2Fe-2S ferredoxin-type domain. [2Fe-2S] cluster is bound by residues cysteine 300, cysteine 305, cysteine 308, and cysteine 338.

As to quaternary structure, the two-component system 3-ketosteroid-9-alpha-monooxygenase is composed of an oxygenase component KshA and a reductase component KshB. FAD is required as a cofactor. The cofactor is [2Fe-2S] cluster.

The catalysed reaction is androsta-1,4-diene-3,17-dione + 2 reduced [2Fe-2S]-[ferredoxin] + O2 + 2 H(+) = 9alpha-hydroxyandrosta-1,4-diene-3,17-dione + 2 oxidized [2Fe-2S]-[ferredoxin] + H2O. It functions in the pathway steroid metabolism; cholesterol degradation. Its activity is regulated as follows. KSH activity is completely inhibited by zinc ions. KshB is specifically inhibited by Cu(2+) ions. Functionally, probably involved in the degradation of cholesterol. In vitro, catalyzes the introduction of a 9alpha-hydroxyl moiety into the ring B of 3-ketosteroid substrates such as 1,4-androstadiene-3,17-dione (ADD), 4-androstene-3,17-dione (AD), 4-androstene-17beta-ol-3-one (testosterone), 4-pregnene-3,20-dione (progesterone), 19-nor-4-androstene-3,17-dione (nordion), 1-(5alpha)-androstene-3,17-dione, 5alpha-androstane-3,17-dione and 5beta-androstane-3,17-dione. KSH has the highest activity with 3-keto-Delta4 steroid substrates. The sequence is that of 3-ketosteroid-9-alpha-monooxygenase, ferredoxin reductase component from Rhodococcus rhodochrous.